The sequence spans 484 residues: Ribosomal protein uS12 methylthiotransferase RimO (484 aa).

The MTTase N-terminal domain occupies 8–119 (RRVAMVTLGC…LAERLDDVLA (112 aa)). Residues Cys17, Cys53, Cys82, Cys184, Cys188, and Cys191 each coordinate [4Fe-4S] cluster. The Radical SAM core domain maps to 170–401 (LDDSPLAALK…ALADELVAQR (232 aa)). Residues 403-469 (EDRVGTEVRV…GVDLVVRPVG (67 aa)) form the TRAM domain.

Belongs to the methylthiotransferase family. RimO subfamily. Requires [4Fe-4S] cluster as cofactor.

The protein localises to the cytoplasm. The enzyme catalyses L-aspartate(89)-[ribosomal protein uS12]-hydrogen + (sulfur carrier)-SH + AH2 + 2 S-adenosyl-L-methionine = 3-methylsulfanyl-L-aspartate(89)-[ribosomal protein uS12]-hydrogen + (sulfur carrier)-H + 5'-deoxyadenosine + L-methionine + A + S-adenosyl-L-homocysteine + 2 H(+). In terms of biological role, catalyzes the methylthiolation of an aspartic acid residue of ribosomal protein uS12. The protein is Ribosomal protein uS12 methylthiotransferase RimO of Saccharopolyspora erythraea (strain ATCC 11635 / DSM 40517 / JCM 4748 / NBRC 13426 / NCIMB 8594 / NRRL 2338).